The sequence spans 88 residues: Small ribosomal subunit protein uS17 (88 aa).

This sequence belongs to the universal ribosomal protein uS17 family. In terms of assembly, part of the 30S ribosomal subunit.

One of the primary rRNA binding proteins, it binds specifically to the 5'-end of 16S ribosomal RNA. This Maridesulfovibrio salexigens (strain ATCC 14822 / DSM 2638 / NCIMB 8403 / VKM B-1763) (Desulfovibrio salexigens) protein is Small ribosomal subunit protein uS17.